A 155-amino-acid chain; its full sequence is Small ribosomal subunit protein uS7c (155 aa).

This sequence belongs to the universal ribosomal protein uS7 family. As to quaternary structure, part of the 30S ribosomal subunit.

It localises to the plastid. It is found in the chloroplast. Functionally, one of the primary rRNA binding proteins, it binds directly to 16S rRNA where it nucleates assembly of the head domain of the 30S subunit. In Saruma henryi (Upright wild ginger), this protein is Small ribosomal subunit protein uS7c (rps7).